The sequence spans 502 residues: ATP synthase subunit alpha (502 aa).

A disordered region spans residues 115–135; it reads VDGLGPINTTNTRPIESPAPG. ATP is bound at residue 169–176; sequence GDRQTGKT.

This sequence belongs to the ATPase alpha/beta chains family. In terms of assembly, F-type ATPases have 2 components, CF(1) - the catalytic core - and CF(0) - the membrane proton channel. CF(1) has five subunits: alpha(3), beta(3), gamma(1), delta(1), epsilon(1). CF(0) has three main subunits: a(1), b(2) and c(9-12). The alpha and beta chains form an alternating ring which encloses part of the gamma chain. CF(1) is attached to CF(0) by a central stalk formed by the gamma and epsilon chains, while a peripheral stalk is formed by the delta and b chains.

It localises to the cell membrane. The enzyme catalyses ATP + H2O + 4 H(+)(in) = ADP + phosphate + 5 H(+)(out). Produces ATP from ADP in the presence of a proton gradient across the membrane. The alpha chain is a regulatory subunit. This chain is ATP synthase subunit alpha, found in Bacillus cereus (strain B4264).